Consider the following 327-residue polypeptide: Tetraacyldisaccharide 4'-kinase (327 aa).

52 to 59 contacts ATP; the sequence is TLGGAGKT.

It belongs to the LpxK family.

It catalyses the reaction a lipid A disaccharide + ATP = a lipid IVA + ADP + H(+). It participates in glycolipid biosynthesis; lipid IV(A) biosynthesis; lipid IV(A) from (3R)-3-hydroxytetradecanoyl-[acyl-carrier-protein] and UDP-N-acetyl-alpha-D-glucosamine: step 6/6. Transfers the gamma-phosphate of ATP to the 4'-position of a tetraacyldisaccharide 1-phosphate intermediate (termed DS-1-P) to form tetraacyldisaccharide 1,4'-bis-phosphate (lipid IVA). This is Tetraacyldisaccharide 4'-kinase from Methylorubrum extorquens (strain PA1) (Methylobacterium extorquens).